The following is a 317-amino-acid chain: Malate dehydrogenase (317 aa).

NAD(+) contacts are provided by residues 10 to 15 (GGGQIG) and aspartate 34. Substrate-binding residues include arginine 83 and arginine 89. Residues asparagine 96 and 119–121 (ISN) each bind NAD(+). Residues asparagine 121 and arginine 152 each coordinate substrate. The Proton acceptor role is filled by histidine 176.

It belongs to the LDH/MDH superfamily. MDH type 3 family.

The enzyme catalyses (S)-malate + NAD(+) = oxaloacetate + NADH + H(+). Catalyzes the reversible oxidation of malate to oxaloacetate. This Geobacter metallireducens (strain ATCC 53774 / DSM 7210 / GS-15) protein is Malate dehydrogenase.